Consider the following 429-residue polypeptide: D-amino acid dehydrogenase (429 aa).

3-17 (VLILGSGVIGVTSAW) is a binding site for FAD.

This sequence belongs to the DadA oxidoreductase family. It depends on FAD as a cofactor.

The enzyme catalyses a D-alpha-amino acid + A + H2O = a 2-oxocarboxylate + AH2 + NH4(+). It participates in amino-acid degradation; D-alanine degradation; NH(3) and pyruvate from D-alanine: step 1/1. Functionally, oxidative deamination of D-amino acids. This chain is D-amino acid dehydrogenase, found in Xanthomonas euvesicatoria pv. vesicatoria (strain 85-10) (Xanthomonas campestris pv. vesicatoria).